Reading from the N-terminus, the 635-residue chain is Dihydrolipoyllysine-residue acetyltransferase component of pyruvate dehydrogenase complex, mitochondrial (635 aa).

One can recognise a Lipoyl-binding 1 domain in the interval 83 to 160 (GKEITMPALS…EINKPIAIIV (78 aa)). The residue at position 124 (K124) is an N6-lipoyllysine. Positions 171–204 (KNYKPSSQASSTPVQEEAPKPKQEAPKKSTKTYP) are disordered. Polar residues predominate over residues 174 to 184 (KPSSQASSTPV). Residues 187–197 (EAPKPKQEAPK) show a composition bias toward basic and acidic residues. The Lipoyl-binding 2 domain occupies 206-283 (HKVVGMPALS…QINQPVCIIV (78 aa)). K247 is subject to N6-lipoyllysine. The segment at 295-338 (YSVEEQSSSSSSSSQESTPSSSSSSSQESTPSQSSSQQTTRKSG) is disordered. Positions 298 to 334 (EEQSSSSSSSSQESTPSSSSSSSQESTPSQSSSQQTT) are enriched in low complexity. The Peripheral subunit-binding (PSBD) domain maps to 342–379 (FATPAARFEASSKGYDLSAINGTGPNNRILKADVLEFV). The interval 382–413 (KQEVAQQQQQQTTTTTKKPTTPTSSGEFTDIP) is disordered. Residues 387-404 (QQQQQQTTTTTKKPTTPT) show a composition bias toward low complexity. A catalytic region spans residues 403–635 (PTSSGEFTDI…YVENPIKLIL (233 aa)).

The protein belongs to the 2-oxoacid dehydrogenase family. In terms of assembly, 20 to 30 alpha(2)-beta(2) tetramers of E1 + 6 homodimers of E3 + 60 copies of E2. (R)-lipoate serves as cofactor.

Its subcellular location is the mitochondrion matrix. The catalysed reaction is N(6)-[(R)-dihydrolipoyl]-L-lysyl-[protein] + acetyl-CoA = N(6)-[(R)-S(8)-acetyldihydrolipoyl]-L-lysyl-[protein] + CoA. Its function is as follows. The pyruvate dehydrogenase complex catalyzes the overall conversion of pyruvate to acetyl-CoA and CO(2). It contains multiple copies of three enzymatic components: pyruvate dehydrogenase (E1), dihydrolipoamide acetyltransferase (E2) and lipoamide dehydrogenase (E3). This is Dihydrolipoyllysine-residue acetyltransferase component of pyruvate dehydrogenase complex, mitochondrial (pdhC) from Dictyostelium discoideum (Social amoeba).